Consider the following 405-residue polypeptide: Acetylornithine aminotransferase (405 aa).

Residues 107–108 (GA) and F140 contribute to the pyridoxal 5'-phosphate site. R143 serves as a coordination point for N(2)-acetyl-L-ornithine. Position 225–228 (225–228 (DEVQ)) interacts with pyridoxal 5'-phosphate. K254 carries the post-translational modification N6-(pyridoxal phosphate)lysine. N(2)-acetyl-L-ornithine is bound at residue S282. Residue T283 coordinates pyridoxal 5'-phosphate.

Belongs to the class-III pyridoxal-phosphate-dependent aminotransferase family. ArgD subfamily. In terms of assembly, homodimer. Pyridoxal 5'-phosphate is required as a cofactor.

The protein resides in the cytoplasm. The catalysed reaction is N(2)-acetyl-L-ornithine + 2-oxoglutarate = N-acetyl-L-glutamate 5-semialdehyde + L-glutamate. Its pathway is amino-acid biosynthesis; L-arginine biosynthesis; N(2)-acetyl-L-ornithine from L-glutamate: step 4/4. In Shewanella oneidensis (strain ATCC 700550 / JCM 31522 / CIP 106686 / LMG 19005 / NCIMB 14063 / MR-1), this protein is Acetylornithine aminotransferase.